The sequence spans 687 residues: Adhesion G-protein coupled receptor G1 (687 aa).

An N-terminal signal peptide occupies residues Met1 to Gly25. Arg26–Arg33 is a binding site for heparin. Residues Arg26–Tyr402 are Extracellular-facing. 2 cysteine pairs are disulfide-bonded: Cys35/Cys91 and Cys121/Cys177. Residues Asn39, Asn148, and Asn171 are each glycosylated (N-linked (GlcNAc...) asparagine). Heparin is bound at residue Leu190–Pro200. One can recognise a GAIN-B domain in the interval Asp224–Val395. Residues Asn234, Asn303, Asn324, and Asn341 are each glycosylated (N-linked (GlcNAc...) asparagine). 2 disulfide bridges follow: Cys346/Cys377 and Cys366/Cys379. The interval Cys346 to Val395 is GPS. The tract at residues Tyr384–Ala397 is stachel. A helical transmembrane segment spans residues Leu403 to Ala423. Residues Ala424–Asn442 lie on the Cytoplasmic side of the membrane. The chain crosses the membrane as a helical span at residues Leu443–Thr463. At Gly464 to Arg470 the chain is on the extracellular side. A helical transmembrane segment spans residues Ala471–Gly491. Topologically, residues Tyr492–Lys512 are cytoplasmic. The helical transmembrane segment at Leu513–Val533 threads the bilayer. At Asp534–Gly570 the chain is on the extracellular side. The chain crosses the membrane as a helical span at residues Leu571–Leu591. The Cytoplasmic segment spans residues Arg592–Val603. A helical transmembrane segment spans residues Leu604 to Phe624. Residues Ala625–Gln630 are Extracellular-facing. A helical membrane pass occupies residues Leu631–Trp651. At Tyr652–Ile687 the chain is on the cytoplasmic side. The tract at residues Ser664–Ile687 is disordered. The span at Ser678 to Ile687 shows a compositional bias: low complexity.

It belongs to the G-protein coupled receptor 2 family. LN-TM7 subfamily. In terms of assembly, heterodimer of 2 chains generated by proteolytic processing; the large extracellular N-terminal fragment (ADGRG1 NT) and the membrane-bound C-terminal fragment (ADGRG1-CT) predominantly remain associated and non-covalently linked. ADGRG1 NT self-associates in a trans-trans manner; the homophilic interaction enhances receptor signaling. Interacts with TGM2. Interacts with heparin; leading to the reduction of ADGRG1 shedding. Interacts with COL3A1. Part of a GPCR-tetraspanin complex at least consisting of ADGRG1, CD81, eventually CD9, and GNA11 in which CD81 is enhancing the association of ADGRG1 with GNA11. Post-translationally, autoproteolytically cleaved into 2 fragments; the large extracellular N-terminal fragment (ADGRG1 NT) and the membrane-bound C-terminal fragment (ADGRG1 CT) predominantly remain associated and non-covalently linked. Shedding to yield the secreted ADGRG1 N-terminal fragment seems to involve metalloprotease(s). In terms of processing, ubiquitinated. Undergoes polyubiquitination upon activation.

The protein localises to the cell membrane. Its subcellular location is the secreted. It localises to the membrane raft. Its activity is regulated as follows. Forms a heterodimer of 2 chains generated by proteolytic processing that remain associated through non-covalent interactions mediated by the GAIN-B domain. In the inactivated receptor, the Stachel sequence (also named stalk) is embedded in the GAIN-B domain, where it adopts a beta-strand conformation. On activation, the Stachel moves into the 7 transmembrane region and adopts a twisted hook-shaped configuration that forms contacts within the receptor, leading to coupling of a G-alpha protein, which activates signaling. The cleaved GAIN-B and N-terminal domains can then dissociate from the rest of the receptor. Adhesion G-protein coupled receptor (aGPCR) for steroid hormone 17alpha-hydroxypregnenolone (17-OH), which is involved in cell adhesion and cell-cell interactions. Ligand binding causes a conformation change that triggers signaling via guanine nucleotide-binding proteins (G proteins) and modulates the activity of downstream effectors, such as RhoA pathway. ADGRG1 is coupled to G(12) and/or G(13) G proteins (GNA12 and GNA13, respectively) and mediates the activation Rho small GTPases. Acts as a potent suppressor of ferroptosis: binding to 17-OH-binding initiates signaling that down-regulates CD36 and alleviates ferroptosis-induced liver injury. Ligand-binding also induces cell adhesion activity via association with proteins such as collagen III/COL3A1 and TGM2. Mediates cell matrix adhesion in developing neurons and hematopoietic stem cells. Involved in cortical development, specifically in maintenance of the pial basement membrane integrity and in cortical lamination: association with COL3A1 in the developing brain inhibits neuronal migration via activation of the RhoA pathway. Together with TGM2, acts as a regulator of myelination and myelin repair in oligodendrocyte precursor cells. Acts as a hemostatic sensor of shear force: G protein-coupled receptor signaling is activated in response to shear force in platelets, promoting G(13) G protein signaling, and platelet shape change and aggregation in a COL3A1-dependent manner. Acts as an inhibitor of VEGFA production thereby inhibiting angiogenesis through a signaling pathway mediated by PRKCA. Plays a role in the maintenance of hematopoietic stem cells in bone marrow niche. Plays an essential role in testis development. The protein is Adhesion G-protein coupled receptor G1 (ADGRG1) of Gorilla gorilla gorilla (Western lowland gorilla).